A 498-amino-acid chain; its full sequence is ATP synthase subunit beta, chloroplastic (498 aa).

Threonine 6 is modified (phosphothreonine). The residue at position 13 (serine 13) is a Phosphoserine. An ATP-binding site is contributed by 172 to 179 (GGAGVGKT).

The protein belongs to the ATPase alpha/beta chains family. In terms of assembly, F-type ATPases have 2 components, CF(1) - the catalytic core - and CF(0) - the membrane proton channel. CF(1) has five subunits: alpha(3), beta(3), gamma(1), delta(1), epsilon(1). CF(0) has four main subunits: a(1), b(1), b'(1) and c(9-12).

It localises to the plastid. The protein localises to the chloroplast thylakoid membrane. The enzyme catalyses ATP + H2O + 4 H(+)(in) = ADP + phosphate + 5 H(+)(out). In terms of biological role, produces ATP from ADP in the presence of a proton gradient across the membrane. The catalytic sites are hosted primarily by the beta subunits. The sequence is that of ATP synthase subunit beta, chloroplastic from Barbarea verna (Land cress).